Reading from the N-terminus, the 323-residue chain is uncharacterized protein (323 aa).

The Proton donor role is filled by Y59. Residue 198–208 participates in NADP(+) binding; sequence SPLAQGLLGGK.

This sequence belongs to the aldo/keto reductase family. Aldo/keto reductase 2 subfamily.

This is an uncharacterized protein from Mycobacterium tuberculosis (strain CDC 1551 / Oshkosh).